The chain runs to 306 residues: uncharacterized protein (306 aa).

8 consecutive transmembrane segments (helical) span residues leucine 7–alanine 27, valine 30–leucine 50, leucine 68–leucine 88, alanine 95–isoleucine 115, alanine 144–phenylalanine 164, isoleucine 194–valine 214, isoleucine 232–phenylalanine 252, and threonine 274–proline 294.

It is found in the cell membrane. This is an uncharacterized protein from Mycoplasma genitalium (strain ATCC 33530 / DSM 19775 / NCTC 10195 / G37) (Mycoplasmoides genitalium).